We begin with the raw amino-acid sequence, 260 residues long: Endomucin (260 aa).

The signal sequence occupies residues 1-18 (MELLQVTILFLLPSICSS). Residues N19, N28, N97, and N103 are each glycosylated (N-linked (GlcNAc...) asparagine). Over 19-189 (NSTGVLEAAN…TSATSRSYSS (171 aa)) the chain is Extracellular. Polar residues-rich tracts occupy residues 119–133 (QSSK…SIKT) and 145–170 (ASPS…SQVI). The segment at 119–182 (QSSKPKTETQ…EGGKNASTSA (64 aa)) is disordered. 2 N-linked (GlcNAc...) asparagine glycosylation sites follow: N163 and N177. Residues 190-210 (IILPVVIALIVITLSVFVLVG) traverse the membrane as a helical segment. Residues 211–260 (LYRMCWKADPGTPENGNDQPQSDKESVKLLTVKTISHESGEHSAQGKTKN) lie on the Cytoplasmic side of the membrane. At S236 the chain carries Phosphoserine.

In terms of processing, highly O-glycosylated. Sialic acid-rich glycoprotein.

Its subcellular location is the membrane. Functionally, endothelial sialomucin, also called endomucin or mucin-like sialoglycoprotein, which interferes with the assembly of focal adhesion complexes and inhibits interaction between cells and the extracellular matrix. The chain is Endomucin (EMCN) from Pongo abelii (Sumatran orangutan).